Reading from the N-terminus, the 58-residue chain is Small ribosomal subunit protein bS21 (58 aa).

The disordered stretch occupies residues 35 to 58; that stretch reads REHYEKPSVKKKKKSEAARKRKFK. The span at 43–58 shows a compositional bias: basic residues; it reads VKKKKKSEAARKRKFK.

Belongs to the bacterial ribosomal protein bS21 family.

The chain is Small ribosomal subunit protein bS21 from Clostridium botulinum (strain Alaska E43 / Type E3).